Reading from the N-terminus, the 88-residue chain is Phosphocarrier protein HPr (88 aa).

The region spanning 1–88 (MVVKTVRVLN…RLFQNKFEEE (88 aa)) is the HPr domain. Residue H15 is the Pros-phosphohistidine intermediate of the active site. S46 is subject to Phosphoserine; by HPrK/P.

It belongs to the HPr family.

The protein localises to the cytoplasm. Phosphorylation on Ser-46 inhibits the phosphoryl transfer from enzyme I to HPr. In terms of biological role, general (non sugar-specific) component of the phosphoenolpyruvate-dependent sugar phosphotransferase system (sugar PTS). This major carbohydrate active-transport system catalyzes the phosphorylation of incoming sugar substrates concomitantly with their translocation across the cell membrane. The phosphoryl group from phosphoenolpyruvate (PEP) is transferred to the phosphoryl carrier protein HPr by enzyme I. Phospho-HPr then transfers it to the PTS EIIA domain. This is Phosphocarrier protein HPr (ptsH) from Treponema pallidum (strain Nichols).